A 279-amino-acid polypeptide reads, in one-letter code: Ribosomal RNA small subunit methyltransferase A (279 aa).

Positions 15, 17, 42, 64, 89, and 109 each coordinate S-adenosyl-L-methionine.

Belongs to the class I-like SAM-binding methyltransferase superfamily. rRNA adenine N(6)-methyltransferase family. RsmA subfamily.

It is found in the cytoplasm. The catalysed reaction is adenosine(1518)/adenosine(1519) in 16S rRNA + 4 S-adenosyl-L-methionine = N(6)-dimethyladenosine(1518)/N(6)-dimethyladenosine(1519) in 16S rRNA + 4 S-adenosyl-L-homocysteine + 4 H(+). In terms of biological role, specifically dimethylates two adjacent adenosines (A1518 and A1519) in the loop of a conserved hairpin near the 3'-end of 16S rRNA in the 30S particle. May play a critical role in biogenesis of 30S subunits. This is Ribosomal RNA small subunit methyltransferase A from Prochlorococcus marinus (strain SARG / CCMP1375 / SS120).